Consider the following 465-residue polypeptide: MPPCYPFLLSWEGWARDPPGRPGGAMRAHIITYGCQMNEYDSHLVASELVSLGWELVDSVEEADFVLVNTCAVRGKPVEKVRSLLGQLRKEKERRGLLIGMMGCLAQLDEGQQMAKKFGVDVLLGPGALTSLPEALKANERFWDLTFREDVLDYIPPPPKGALSAHVTIIRGCNHHCTYCIVPTTRGPEVSRHPDLILKEIELLKQAGVVEVTLLGQNVNSYGKDQPGFPSFAELLRMVGGMGIPRVRFLTSHPVNFTDDIIEAIAETPAICRYIHLPVQSGSDRVLRRMAREYRRAHYLERIRKIREALPDAVLSTDIIVGFPGETEEDFQETLSLYDEVGYDQAYMFIYSPRPGTPAYKHFQDLPREVKVERLMRLIEKQKEWSYRRNLEWVGKTVEVLVRGEAKEEGFVQGHDRGNHPVLVPASQAPVPGLYQVEIKQATPHLLFGEVVGAEAPAPIPLPVA.

The MTTase N-terminal domain maps to 26 to 141 (MRAHIITYGC…LPEALKANER (116 aa)). The [4Fe-4S] cluster site is built by Cys-35, Cys-71, Cys-104, Cys-173, Cys-177, and Cys-180. The Radical SAM core domain occupies 159-388 (PKGALSAHVT…IEKQKEWSYR (230 aa)). A TRAM domain is found at 391 to 453 (LEWVGKTVEV…PHLLFGEVVG (63 aa)).

It belongs to the methylthiotransferase family. MiaB subfamily. As to quaternary structure, monomer. Requires [4Fe-4S] cluster as cofactor.

The protein resides in the cytoplasm. It catalyses the reaction N(6)-dimethylallyladenosine(37) in tRNA + (sulfur carrier)-SH + AH2 + 2 S-adenosyl-L-methionine = 2-methylsulfanyl-N(6)-dimethylallyladenosine(37) in tRNA + (sulfur carrier)-H + 5'-deoxyadenosine + L-methionine + A + S-adenosyl-L-homocysteine + 2 H(+). Its function is as follows. Catalyzes the methylthiolation of N6-(dimethylallyl)adenosine (i(6)A), leading to the formation of 2-methylthio-N6-(dimethylallyl)adenosine (ms(2)i(6)A) at position 37 in tRNAs that read codons beginning with uridine. The chain is tRNA-2-methylthio-N(6)-dimethylallyladenosine synthase from Thermus thermophilus (strain ATCC 27634 / DSM 579 / HB8).